The following is a 778-amino-acid chain: GRIP and coiled-coil domain-containing protein 1 (778 aa).

A coiled-coil region spans residues 13 to 61 (SKKDLLETIETQKKQLLQYQARLKDVVRAYKSLLKEKEALEASIKVLSV). 3 disordered regions span residues 70-157 (SGVQ…MDKR), 186-208 (YLAD…EEER), and 617-638 (GRRS…DTAS). Over residues 83-93 (VDDRCSTHSED) the composition is skewed to basic and acidic residues. 2 stretches are compositionally biased toward low complexity: residues 94-109 (STGT…SLTS) and 133-152 (ASGS…SAGS). Residues 152 to 702 (SEMDKRVHQL…EEGERHREEV (551 aa)) adopt a coiled-coil conformation. A GRIP domain is found at 716–766 (QSREGANLEYLKNIIYRFLTLPDSLGRQQTLTAILTILHFSPEEKQVLMRL).

The protein localises to the cytoplasm. The protein resides in the golgi apparatus membrane. In terms of biological role, probably involved in maintaining Golgi structure. The polypeptide is GRIP and coiled-coil domain-containing protein 1 (Gcc1) (Mus musculus (Mouse)).